Here is a 3122-residue protein sequence, read N- to C-terminus: tRNA nuclease CdiA-2 (3122 aa).

The two-partner system transport domain (TPS) stretch occupies residues 36–205; that stretch reads RAGVVPAWLS…ATLTTGNPNF (170 aa). Residues 54 to 74 traverse the membrane as a helical segment; that stretch reads VALAVLVAAGVVPIWVNAQVV. The segment at 256–1254 is FHA-1; the sequence is VVAGSNQVDY…GGSVAIQASG (999 aa). The disordered stretch occupies residues 492–512; it reads GMTLGGGSLSNQGGRANSQGP. Residues 500–512 are compositionally biased toward polar residues; sequence LSNQGGRANSQGP. The interval 1345–1635 is receptor binding domain (RBD); it reads TRRVMQTSGN…SATAVNVLSN (291 aa). The segment at 1790–1845 is periplasmic FHA-1 repeat (pFR); sequence TAGNIDLKNTQVFTNSGTVKADTTLALQGKQIDNAFGALQSGGLTSLDTTGNVDLT. The segment at 1947-2085 is FHA-2; that stretch reads SDTDLNSATG…TERHVYNSRE (139 aa). Disordered regions lie at residues 2002–2031, 2151–2174, and 2325–2352; these read TSTINANSSGDQGNRSYAETRHGSDQALTG, TTSQDTSQSSTTYQEQHSGLMSGG, and IGVQVSVGSSHSSMQSSEDQTIQRGSSI. The pretoxin (PT) domain stretch occupies residues 2086 to 2825; it reads THSRSGVVSG…SAGAAMASNV (740 aa). Composition is skewed to low complexity over residues 2151–2170 and 2325–2341; these read TTSQDTSQSSTTYQEQHSGL and IGVQVSVGSSHSSMQSS. The segment covering 2342–2352 has biased composition (polar residues); sequence EDQTIQRGSSI. The segment at 2821 to 3122 is C-terminal effector domain (CT), has tRNA nuclease activity; the sequence is MASNVELYNA…NITIIKPKGN (302 aa). The short motif at 2826-2829 is the ELYN C-terminal motif element; it reads ELYN. The segment at 2948–3000 is disordered; it reads GATDRTPPSNAILSNSNSDNNSTQGSQSGTVTKTPNPEATGSLSGKPTQIPPL. The segment at 2948–3122 is truncated CT domain, has tRNA nuclease activity, sufficient for interaction with CdiI-2; that stretch reads GATDRTPPSN…NITIIKPKGN (175 aa). Residues 2953 to 2994 are compositionally biased toward polar residues; sequence TPPSNAILSNSNSDNNSTQGSQSGTVTKTPNPEATGSLSGKP. The interval 2987-3122 is has tRNase activity; sequence TGSLSGKPTQ…NITIIKPKGN (136 aa). Active-site residues include Glu-3012, Asp-3039, Asp-3048, and Lys-3067.

This sequence in the N-terminal section; belongs to the CdiA toxin family. Interacts with cognate immunity protein CdiI, which blocks its tRNA nuclease activity. The truncated CT fragment (residues 2948-3122) specifically interacts with cognate CdiI which inhibits the tRNA nuclease activity. The truncated CT is more stable in vitro than the original CT fragment characterized in E.coli.

The protein resides in the membrane. It is found in the secreted. It localises to the target cell. Its subcellular location is the target cell cytoplasm. Toxic component of a toxin-immunity protein module, which functions as a cellular contact-dependent growth inhibition (CDI) system. CDI modules allow bacteria to communicate with and inhibit the growth of closely related neighboring bacteria in a contact-dependent fashion. The C-terminal 301 residues (the CT fragment) cleaves near the C-terminus of E.coli tRNA1B(Ala), probably preventing tRNA charging, and inhibits growth in E.coli. A truncated CT fragment (residues 2948-3122) has tRNA endonuclease activity on several B.thailandensis tRNAs as well as tRNA2(Arg) where it cleaves after A-70 and U-71. Inactive CT domain binds tRNA, probably in a 1:1 complex. Toxic activity is neutralized by coexpression of the cognate immunity protein CdiI in E.coli, but not by non-cognate immunity proteins from other strains of B.pseudomallei. May use lipopolysaccharide as its target cell receptor. Probably gains access to the cytoplasm of target cells (B.thailandensis strain E264) by using integral inner membrane protein BTH_II0599. Protein BTH_I0359 is also implicated in an unknown fashion in CDI in B.thailandensis strain E264. Its function is as follows. Expression of this cdiAIB locus in B.thailandensis confers protection against other bacteria carrying the locus; growth inhibition requires cellular contact. Functionally, the CdiA protein is thought to be exported from the cell through the central lumen of CdiB, the other half of its two-partner system (TPS). The TPS domain probably remains associated with CdiB while the FHA-1 domain forms an extended filament with the receptor-binding domain (RBD) at its extremity; in the secretion arrested state the C-terminus of the RBD domain form a hairpin-like structure as the FHA-2, PT and CT domains are periplasmic. Upon binding to a target cell outer membrane receptor (possibly a lipoprotein in this CDI) a signal is transmitted to activate secretion. The filament elongates slightly, the rest of CdiA is secreted and the FHA-2 domain becomes stably associated with the target cell's outer membrane where it facilitates entry of the toxic CT domain into the target cell periplasm. From there the toxic CT domain is cleaved and gains access to the target cell cytoplasm via an inner membrane protein (probably inner membrane protein BTH_II0599). The chain is tRNA nuclease CdiA-2 (cdiA2) from Burkholderia pseudomallei (strain 1026b).